We begin with the raw amino-acid sequence, 121 residues long: Large ribosomal subunit protein bL20 (121 aa).

Belongs to the bacterial ribosomal protein bL20 family.

In terms of biological role, binds directly to 23S ribosomal RNA and is necessary for the in vitro assembly process of the 50S ribosomal subunit. It is not involved in the protein synthesizing functions of that subunit. The polypeptide is Large ribosomal subunit protein bL20 (Beijerinckia indica subsp. indica (strain ATCC 9039 / DSM 1715 / NCIMB 8712)).